The primary structure comprises 416 residues: Phosphoglycerate kinase (416 aa).

Valine 23, aspartate 24, phenylalanine 25, asparagine 26, arginine 39, serine 62, histidine 63, glycine 65, arginine 66, leucine 121, arginine 122, histidine 169, and arginine 170 together coordinate (2R)-3-phosphoglycerate. Glycine 213 is a binding site for ADP. Glycine 213 is a CDP binding site. 2 residues coordinate AMP: alanine 214 and lysine 215. Residue alanine 214 coordinates ATP. Residue alanine 214 participates in Mg(2+) binding. Aspartate 218 lines the CDP pocket. Aspartate 218 is a Mg(2+) binding site. Lysine 219 provides a ligand contact to AMP. Lysine 219 is a binding site for ATP. Glycine 237 lines the ADP pocket. Glycine 237 serves as a coordination point for CDP. Residues glycine 238 and glycine 312 each coordinate AMP. The ATP site is built by glycine 238 and glycine 312. 2 residues coordinate CDP: glycine 337 and phenylalanine 342. Phenylalanine 342 is an ADP binding site. AMP is bound at residue glutamate 343. ATP is bound by residues glutamate 343, aspartate 374, and threonine 375. Aspartate 374 is a binding site for Mg(2+).

Belongs to the phosphoglycerate kinase family. Monomer. The cofactor is Mg(2+).

It is found in the cytoplasm. Its subcellular location is the mitochondrion. It carries out the reaction (2R)-3-phosphoglycerate + ATP = (2R)-3-phospho-glyceroyl phosphate + ADP. Its pathway is carbohydrate degradation; glycolysis; pyruvate from D-glyceraldehyde 3-phosphate: step 2/5. Functionally, catalyzes one of the two ATP producing reactions in the glycolytic pathway via the reversible conversion of 1,3-diphosphoglycerate to 3-phosphoglycerate. Both L- and D- forms of purine and pyrimidine nucleotides can be used as substrates, but the activity is much lower on pyrimidines. Negatively regulates the biosynthesis of acetyl-CoA from pyruvate in the mitochondrion. The protein is Phosphoglycerate kinase (pgkA) of Agaricus bisporus (White button mushroom).